Reading from the N-terminus, the 1603-residue chain is Protein TIC 214 (1603 aa).

Helical transmembrane passes span 11–31 (VLWA…LFGL), 58–78 (LSGT…FLSI), 86–106 (LLLK…FYWY), 131–151 (IFFD…SPIL), 167–187 (LFVL…FNCI), and 213–233 (FSIF…VPFF).

This sequence belongs to the TIC214 family. In terms of assembly, part of the Tic complex.

It is found in the plastid. The protein resides in the chloroplast inner membrane. Its function is as follows. Involved in protein precursor import into chloroplasts. May be part of an intermediate translocation complex acting as a protein-conducting channel at the inner envelope. This is Protein TIC 214 from Physcomitrium patens (Spreading-leaved earth moss).